We begin with the raw amino-acid sequence, 308 residues long: tRNA dimethylallyltransferase (308 aa).

19-26 is an ATP binding site; the sequence is GPTASGKS. 21–26 contributes to the substrate binding site; that stretch reads TASGKS. An interaction with substrate tRNA region spans residues 44–47; sequence DSMQ.

This sequence belongs to the IPP transferase family. In terms of assembly, monomer. It depends on Mg(2+) as a cofactor.

The enzyme catalyses adenosine(37) in tRNA + dimethylallyl diphosphate = N(6)-dimethylallyladenosine(37) in tRNA + diphosphate. Catalyzes the transfer of a dimethylallyl group onto the adenine at position 37 in tRNAs that read codons beginning with uridine, leading to the formation of N6-(dimethylallyl)adenosine (i(6)A). The polypeptide is tRNA dimethylallyltransferase (Methylobacterium radiotolerans (strain ATCC 27329 / DSM 1819 / JCM 2831 / NBRC 15690 / NCIMB 10815 / 0-1)).